A 291-amino-acid polypeptide reads, in one-letter code: Shikimate dehydrogenase (NADP(+)) (291 aa).

Residues Ser14–Ser16 and Thr61 contribute to the shikimate site. The Proton acceptor role is filled by Lys65. Residue Glu77 participates in NADP(+) binding. Residues Asn86 and Asp102 each contribute to the shikimate site. Residues Gly139 to Ala143, Asn164 to Arg169, and Leu232 contribute to the NADP(+) site. Residue Tyr234 participates in shikimate binding. Gly256 contacts NADP(+).

The protein belongs to the shikimate dehydrogenase family. In terms of assembly, homodimer.

It carries out the reaction shikimate + NADP(+) = 3-dehydroshikimate + NADPH + H(+). It functions in the pathway metabolic intermediate biosynthesis; chorismate biosynthesis; chorismate from D-erythrose 4-phosphate and phosphoenolpyruvate: step 4/7. Its function is as follows. Involved in the biosynthesis of the chorismate, which leads to the biosynthesis of aromatic amino acids. Catalyzes the reversible NADPH linked reduction of 3-dehydroshikimate (DHSA) to yield shikimate (SA). This Blochmanniella pennsylvanica (strain BPEN) protein is Shikimate dehydrogenase (NADP(+)).